The chain runs to 214 residues: Hypoxanthine-guanine phosphoribosyltransferase (214 aa).

An N-acetylalanine modification is found at Ala-2. Lys-69 provides a ligand contact to GMP. At Lys-103 the chain carries N6-acetyllysine. Residue Lys-115 forms a Glycyl lysine isopeptide (Lys-Gly) (interchain with G-Cter in SUMO1); alternate linkage. Residue Lys-115 forms a Glycyl lysine isopeptide (Lys-Gly) (interchain with G-Cter in SUMO2); alternate linkage. GMP-binding positions include 134–142 (EDIIDTGKT), Lys-166, 186–188 (KFV), and Asp-194. The active-site Proton acceptor is Asp-138. Position 142 is a phosphothreonine (Thr-142). Position 194 (Asp-194) interacts with Mg(2+).

This sequence belongs to the purine/pyrimidine phosphoribosyltransferase family. Homotetramer. Mg(2+) is required as a cofactor.

It localises to the cytoplasm. The enzyme catalyses IMP + diphosphate = hypoxanthine + 5-phospho-alpha-D-ribose 1-diphosphate. It catalyses the reaction GMP + diphosphate = guanine + 5-phospho-alpha-D-ribose 1-diphosphate. The protein operates within purine metabolism; IMP biosynthesis via salvage pathway; IMP from hypoxanthine: step 1/1. Its function is as follows. Converts guanine to guanosine monophosphate, and hypoxanthine to inosine monophosphate. Transfers the 5-phosphoribosyl group from 5-phosphoribosylpyrophosphate onto the purine. Plays a central role in the generation of purine nucleotides through the purine salvage pathway. This chain is Hypoxanthine-guanine phosphoribosyltransferase (Hprt1), found in Mus spretus (Western Mediterranean mouse).